The following is a 463-amino-acid chain: Secretogranin-3 (463 aa).

Positions 1-20 (MGPKYVFITAIIGVFWHVQG) are cleaved as a signal peptide. Disordered stretches follow at residues 87–111 (VKRS…DSTK), 225–267 (DDDK…PEED), and 353–398 (EDKN…KGKA). Composition is skewed to basic and acidic residues over residues 102 to 111 (GTLDDADSTK) and 229 to 262 (QEGK…RNEL).

In terms of assembly, interacts with CHGA. Interacts with secretogranin II/SCG2. Interacts (via C-terminus) with CPE.

Its subcellular location is the cytoplasmic vesicle. The protein localises to the secretory vesicle. It localises to the secretory vesicle membrane. It is found in the secreted. In terms of biological role, member of the granin protein family that regulates the biogenesis of secretory granules. Acts as a sorting receptor for intragranular proteins including chromogranin A/CHGA. May also play a role in angiogenesis. Promotes endothelial proliferation, migration and tube formation through MEK/ERK signaling pathway. The protein is Secretogranin-3 (scg3) of Xenopus tropicalis (Western clawed frog).